The following is a 626-amino-acid chain: tRNA uridine 5-carboxymethylaminomethyl modification enzyme MnmG (626 aa).

13–18 (GGGHAG) lines the FAD pocket. 273–287 (GPRYCPSIEDKIHRF) contacts NAD(+).

This sequence belongs to the MnmG family. Homodimer. Heterotetramer of two MnmE and two MnmG subunits. Requires FAD as cofactor.

It is found in the cytoplasm. NAD-binding protein involved in the addition of a carboxymethylaminomethyl (cmnm) group at the wobble position (U34) of certain tRNAs, forming tRNA-cmnm(5)s(2)U34. This Acinetobacter baumannii (strain AB307-0294) protein is tRNA uridine 5-carboxymethylaminomethyl modification enzyme MnmG.